We begin with the raw amino-acid sequence, 256 residues long: Signal peptidase I (256 aa).

Residues Ser32 and Lys75 contribute to the active site.

The protein belongs to the peptidase S26 family.

The catalysed reaction is Cleavage of hydrophobic, N-terminal signal or leader sequences from secreted and periplasmic proteins.. This is Signal peptidase I (lepB) from Aquifex aeolicus (strain VF5).